A 319-amino-acid polypeptide reads, in one-letter code: Biotin synthase (319 aa).

In terms of domain architecture, Radical SAM core spans 44 to 273; that stretch reads IHGDGIDLCS…EAKIRLAGGR (230 aa). The [4Fe-4S] cluster site is built by Cys62, Cys66, and Cys69. Residues Ser106, Cys138, Cys198, and Arg268 each coordinate [2Fe-2S] cluster.

The protein belongs to the radical SAM superfamily. Biotin synthase family. As to quaternary structure, homodimer. It depends on [4Fe-4S] cluster as a cofactor. Requires [2Fe-2S] cluster as cofactor.

It carries out the reaction (4R,5S)-dethiobiotin + (sulfur carrier)-SH + 2 reduced [2Fe-2S]-[ferredoxin] + 2 S-adenosyl-L-methionine = (sulfur carrier)-H + biotin + 2 5'-deoxyadenosine + 2 L-methionine + 2 oxidized [2Fe-2S]-[ferredoxin]. It participates in cofactor biosynthesis; biotin biosynthesis; biotin from 7,8-diaminononanoate: step 2/2. Its function is as follows. Catalyzes the conversion of dethiobiotin (DTB) to biotin by the insertion of a sulfur atom into dethiobiotin via a radical-based mechanism. The protein is Biotin synthase of Clostridium perfringens (strain 13 / Type A).